A 232-amino-acid chain; its full sequence is Large ribosomal subunit protein uL1 (232 aa).

The protein belongs to the universal ribosomal protein uL1 family. As to quaternary structure, part of the 50S ribosomal subunit.

In terms of biological role, binds directly to 23S rRNA. The L1 stalk is quite mobile in the ribosome, and is involved in E site tRNA release. Protein L1 is also a translational repressor protein, it controls the translation of the L11 operon by binding to its mRNA. This is Large ribosomal subunit protein uL1 from Pelotomaculum thermopropionicum (strain DSM 13744 / JCM 10971 / SI).